Here is a 342-residue protein sequence, read N- to C-terminus: S-adenosylmethionine:tRNA ribosyltransferase-isomerase (342 aa).

This sequence belongs to the QueA family. Monomer.

It localises to the cytoplasm. It catalyses the reaction 7-aminomethyl-7-carbaguanosine(34) in tRNA + S-adenosyl-L-methionine = epoxyqueuosine(34) in tRNA + adenine + L-methionine + 2 H(+). It functions in the pathway tRNA modification; tRNA-queuosine biosynthesis. Transfers and isomerizes the ribose moiety from AdoMet to the 7-aminomethyl group of 7-deazaguanine (preQ1-tRNA) to give epoxyqueuosine (oQ-tRNA). This Campylobacter jejuni subsp. jejuni serotype O:23/36 (strain 81-176) protein is S-adenosylmethionine:tRNA ribosyltransferase-isomerase.